The primary structure comprises 78 residues: Acyl carrier protein (78 aa).

A Carrier domain is found at 1-76; that stretch reads MALFEDIQAV…DVVKYIEDNK (76 aa). O-(pantetheine 4'-phosphoryl)serine is present on serine 36.

Belongs to the acyl carrier protein (ACP) family. 4'-phosphopantetheine is transferred from CoA to a specific serine of apo-ACP by AcpS. This modification is essential for activity because fatty acids are bound in thioester linkage to the sulfhydryl of the prosthetic group.

The protein localises to the cytoplasm. It functions in the pathway lipid metabolism; fatty acid biosynthesis. Functionally, carrier of the growing fatty acid chain in fatty acid biosynthesis. This chain is Acyl carrier protein, found in Helicobacter pylori (strain G27).